A 92-amino-acid chain; its full sequence is UPF0213 protein M28_Spy1146 (92 aa).

The region spanning 4-80 is the GIY-YIG domain; the sequence is KKAYMYVLEC…KRKTRSQKLA (77 aa).

It belongs to the UPF0213 family.

This Streptococcus pyogenes serotype M28 (strain MGAS6180) protein is UPF0213 protein M28_Spy1146.